The following is a 161-amino-acid chain: Nucleotide-binding protein Glov_3198 (161 aa).

The protein belongs to the YajQ family.

Nucleotide-binding protein. This Trichlorobacter lovleyi (strain ATCC BAA-1151 / DSM 17278 / SZ) (Geobacter lovleyi) protein is Nucleotide-binding protein Glov_3198.